The primary structure comprises 179 residues: Probable WRKY transcription factor 24 (179 aa).

The WRKY DNA-binding region spans 92–157 (SDDDVLDDGY…YEGVHNHPCE (66 aa)).

Belongs to the WRKY group II-c family.

The protein localises to the nucleus. Transcription factor. Interacts specifically with the W box (5'-(T)TGAC[CT]-3'), a frequently occurring elicitor-responsive cis-acting element. The protein is Probable WRKY transcription factor 24 (WRKY24) of Arabidopsis thaliana (Mouse-ear cress).